The following is a 138-amino-acid chain: Basic phospholipase A2 canebraxin B (138 aa).

The signal sequence occupies residues 1–16 (MRALWIVAVLLVAVEG). 7 cysteine pairs are disulfide-bonded: C42/C131, C44/C60, C59/C111, C65/C138, C66/C104, C73/C97, and C91/C102. 3 residues coordinate Ca(2+): Y43, G45, and G47. H63 is a catalytic residue. D64 contacts Ca(2+). D105 is an active-site residue.

It belongs to the phospholipase A2 family. Group II subfamily. As to quaternary structure, heterodimer of an acidic subunit and a basic chain. The acidic subunit is non-toxic, without enzymatic activity and comprises 3 peptides that are cross-linked by 7 disulfide bridges. The basic subunit is toxic, has phospholipase A2 activity and is composed of a single chain. The cofactor is Ca(2+). As to expression, expressed by the venom gland.

The protein localises to the secreted. It catalyses the reaction a 1,2-diacyl-sn-glycero-3-phosphocholine + H2O = a 1-acyl-sn-glycero-3-phosphocholine + a fatty acid + H(+). Snake venom phospholipase A2 (PLA2) that shows presynaptic neurotoxicity. PLA2 catalyzes the calcium-dependent hydrolysis of the 2-acyl groups in 3-sn-phosphoglycerides. This Crotalus horridus (Timber rattlesnake) protein is Basic phospholipase A2 canebraxin B.